The chain runs to 222 residues: MESTLELTKIKEVLQKNLKILIILPLLFLIISAIVTFFVLSPKYQANTQILVNQTKGDNPQFMAQEVQSNIQLVNTYKEIVKSPRILDEVSKDLNNKYSPSKLSSMLTITNQENTQLINIQVKSGHKQDSEKIANSFAKVTSKQIPKIMSLDNVSILSKADGTAVKVAPKTVVNLIGAFFLGLVVALIYIFFKVIFDKRIKDEEDVEKELGLPVLGSIQKFN.

The next 2 helical transmembrane spans lie at 20-40 (ILII…FFVL) and 172-192 (VVNL…YIFF).

This sequence belongs to the CpsC/CapA family.

The protein resides in the cell membrane. Its function is as follows. Required for the biosynthesis of type 8 capsular polysaccharide (Cap8/CP8). Might act as the chain-length regulator. The sequence is that of Capsular polysaccharide type 8 biosynthesis protein cap8A (cap8A) from Staphylococcus aureus.